A 1431-amino-acid polypeptide reads, in one-letter code: DNA-directed RNA polymerase subunit beta' (1431 aa).

Residues Cys66, Cys68, Cys81, and Cys84 each contribute to the Zn(2+) site. 3 residues coordinate Mg(2+): Asp470, Asp472, and Asp474. Residues Cys813, Cys887, Cys894, and Cys897 each contribute to the Zn(2+) site.

This sequence belongs to the RNA polymerase beta' chain family. In terms of assembly, the RNAP catalytic core consists of 2 alpha, 1 beta, 1 beta' and 1 omega subunit. When a sigma factor is associated with the core the holoenzyme is formed, which can initiate transcription. Requires Mg(2+) as cofactor. Zn(2+) is required as a cofactor.

The enzyme catalyses RNA(n) + a ribonucleoside 5'-triphosphate = RNA(n+1) + diphosphate. In terms of biological role, DNA-dependent RNA polymerase catalyzes the transcription of DNA into RNA using the four ribonucleoside triphosphates as substrates. This Parabacteroides distasonis (strain ATCC 8503 / DSM 20701 / CIP 104284 / JCM 5825 / NCTC 11152) protein is DNA-directed RNA polymerase subunit beta'.